The sequence spans 101 residues: Feather keratin Cos1-1/Cos1-3/Cos2-1 (101 aa).

Residue S2 is modified to N-acetylserine.

The protein belongs to the avian keratin family. In terms of assembly, the avian keratins (F-ker, S-ker, C-ker and B-ker) are a complex mixture of very similar polypeptides.

The chain is Feather keratin Cos1-1/Cos1-3/Cos2-1 from Columba livia (Rock dove).